The following is a 663-amino-acid chain: Zinc finger protein GLI2 (663 aa).

A disordered region spans residues 159-186 (ISSNSNCISDSSQSKQSSESAVSSTVNP). Over residues 160–182 (SSNSNCISDSSQSKQSSESAVSS) the composition is skewed to low complexity. 5 C2H2-type zinc fingers span residues 234–259 (TNCHWEGCTKEYDTQEQLVHHINNDH), 267–294 (FVCRWQDCTREQKPFKAQYMLVVHMRRH), 300–324 (HKCTFEGCSKAYSRLENLKTHLRSH), 330–355 (YVCEHEGCNKAFSNASDRAKHQNRTH), and 361–386 (YVCKIPGCTKRYTDPSSLRKHVKTVH). Disordered stretches follow at residues 374-440 (DPSS…MEDC), 452-481 (VMCQSSPGGQSSCSSEPSPLGSTNNNDSGV), 544-578 (CSWVNPAPQGRNTKLPPISGNGSILENSGGSSRTL), and 619-663 (SGIS…DIKL). The segment covering 386 to 402 (HGPDAHVTKKQRNDVHP) has biased composition (basic and acidic residues). Residues 456–473 (SSPGGQSSCSSEPSPLGS) show a composition bias toward low complexity. 2 stretches are compositionally biased toward polar residues: residues 563–578 (GNGSILENSGGSSRTL) and 619–647 (SGISPYFSSRRSSEASQLGHRPNNTSSAD).

The protein belongs to the GLI C2H2-type zinc-finger protein family.

It localises to the nucleus. The protein resides in the cytoplasm. The protein localises to the cell projection. Its subcellular location is the cilium. Functions as a transcription regulator in the hedgehog (Hh) pathway. Functions as a transcriptional activator. May also function as transcriptional repressor. Binds to the DNA sequence 5'-GAACCACCCA-3'. Is involved in the smoothened (SHH) signaling pathway. Required for normal skeleton development. This Gallus gallus (Chicken) protein is Zinc finger protein GLI2.